A 528-amino-acid chain; its full sequence is Vacuolar fusion protein MON1 homolog (528 aa).

Residues 1-16 (MEVEQTSVRSDTNSTC) show a composition bias toward polar residues. A disordered region spans residues 1–50 (MEVEQTSVRSDTNSTCEYLDAEGDPESPNLYQEADPDQEAEQQNHSIISE).

This sequence belongs to the MON1/SAND family. Component of the Mon1-Ccz1 guanyl-nucleotide exchange factor complex made up of Mon1, Ccz1 and Bulli; the interaction of Bulli with the Mon1-Ccz1 heterodimer is mediated via the C-terminal Mic1 domain of Bulli. Mon1 and Ccz1 form a stable complex which displays Rab7 GEF activity with or without Bulli; GEF activity is enhanced by Bulli possibly by improving membrane association of the complex. Interacts with Rab5 and Rab7; preferentially binds GTP-bound Rab5 and GDP-bound Rab7.

Its subcellular location is the cytoplasm. It localises to the cytosol. The Rab7 guanyl-nucleotide exchange factor (GEF) activity of the Mon1-Ccz1 complex is autoinhibited by the N-terminal disordered region of Mon1. GEF activity is stimulated by Rab5-mediated recruitment to membranes. Part of the Mon1-Ccz1 guanyl-nucleotide exchange factor complex specific for Rab7 that promotes the exchange of GDP to GTP, converting Rab7 from an inactive GDP-bound form into an active GTP-bound form. Plays an important role in membrane trafficking through the secretory apparatus. Required for recruitment of Rab7 to endosomal and autophagosomal membranes to mediate endolysosomal and autolysosomal vesicle maturation. Required for fusion of multivesicular bodies and lysosomes but not their formation or trafficking. Involved in the replacement of Rab5 (and possibly Rab4) with Rab7, also known as Rab conversion or the Rab cascade, during endosomal maturation. The Mon1-Ccz1 complex is recruited to phosphatidylinositol 3-phosphate (PtdIns[3]P) enriched membranes by Rab5, which stimulates recruitment and guanyl-nucleotide exchange of Rab7. Together with Rab7 required for autolysosome formation in fat cells and autophagic degradation during starvation-induced basal and developmental autophagy. Involved in neuromuscular junction (NMJ) presynaptic bouton function and morphogenesis. Together with Rab7, regulates levels of postsynaptic glutamate receptor GluRIIA in the NMJ presynapse. This is Vacuolar fusion protein MON1 homolog from Drosophila melanogaster (Fruit fly).